The following is a 211-amino-acid chain: Thiamine-phosphate synthase (211 aa).

4-amino-2-methyl-5-(diphosphooxymethyl)pyrimidine is bound by residues 41–45 (QYRDK) and asparagine 73. Aspartate 74 and aspartate 93 together coordinate Mg(2+). Residue threonine 112 participates in 4-amino-2-methyl-5-(diphosphooxymethyl)pyrimidine binding. A 2-[(2R,5Z)-2-carboxy-4-methylthiazol-5(2H)-ylidene]ethyl phosphate-binding site is contributed by 139–141 (SPT). Lysine 142 contacts 4-amino-2-methyl-5-(diphosphooxymethyl)pyrimidine. Residues glycine 169 and 189 to 190 (VS) each bind 2-[(2R,5Z)-2-carboxy-4-methylthiazol-5(2H)-ylidene]ethyl phosphate.

It belongs to the thiamine-phosphate synthase family. The cofactor is Mg(2+).

It catalyses the reaction 2-[(2R,5Z)-2-carboxy-4-methylthiazol-5(2H)-ylidene]ethyl phosphate + 4-amino-2-methyl-5-(diphosphooxymethyl)pyrimidine + 2 H(+) = thiamine phosphate + CO2 + diphosphate. The enzyme catalyses 2-(2-carboxy-4-methylthiazol-5-yl)ethyl phosphate + 4-amino-2-methyl-5-(diphosphooxymethyl)pyrimidine + 2 H(+) = thiamine phosphate + CO2 + diphosphate. It carries out the reaction 4-methyl-5-(2-phosphooxyethyl)-thiazole + 4-amino-2-methyl-5-(diphosphooxymethyl)pyrimidine + H(+) = thiamine phosphate + diphosphate. The protein operates within cofactor biosynthesis; thiamine diphosphate biosynthesis; thiamine phosphate from 4-amino-2-methyl-5-diphosphomethylpyrimidine and 4-methyl-5-(2-phosphoethyl)-thiazole: step 1/1. In terms of biological role, condenses 4-methyl-5-(beta-hydroxyethyl)thiazole monophosphate (THZ-P) and 2-methyl-4-amino-5-hydroxymethyl pyrimidine pyrophosphate (HMP-PP) to form thiamine monophosphate (TMP). The polypeptide is Thiamine-phosphate synthase (Thioalkalivibrio sulfidiphilus (strain HL-EbGR7)).